Here is a 1202-residue protein sequence, read N- to C-terminus: DNA-directed RNA polymerase subunit beta (1202 aa).

The protein belongs to the RNA polymerase beta chain family. As to quaternary structure, the RNAP catalytic core consists of 2 alpha, 1 beta, 1 beta' and 1 omega subunit. When a sigma factor is associated with the core the holoenzyme is formed, which can initiate transcription.

The enzyme catalyses RNA(n) + a ribonucleoside 5'-triphosphate = RNA(n+1) + diphosphate. DNA-dependent RNA polymerase catalyzes the transcription of DNA into RNA using the four ribonucleoside triphosphates as substrates. The polypeptide is DNA-directed RNA polymerase subunit beta (Mycoplasmopsis synoviae (strain 53) (Mycoplasma synoviae)).